Here is a 413-residue protein sequence, read N- to C-terminus: UPF0754 membrane protein PCC7424_0748 (413 aa).

The next 2 helical transmembrane spans lie at isoleucine 3–isoleucine 23 and isoleucine 391–leucine 411.

Belongs to the UPF0754 family.

The protein resides in the cell inner membrane. This Gloeothece citriformis (strain PCC 7424) (Cyanothece sp. (strain PCC 7424)) protein is UPF0754 membrane protein PCC7424_0748.